Reading from the N-terminus, the 908-residue chain is 26S proteasome non-ATPase regulatory subunit 2 (908 aa).

Methionine 1 bears the N-acetylmethionine mark. Residues 1 to 52 (MEEGGRDKAPVQPQQSPAAALGGTDEKPSGKERRDAGDKDKEQELSEEDKQL) are disordered. Residues 10–20 (PVQPQQSPAAA) show a composition bias toward low complexity. Residue serine 16 is modified to Phosphoserine. Position 24 is a phosphothreonine (threonine 24). The segment covering 24-52 (TDEKPSGKERRDAGDKDKEQELSEEDKQL) has biased composition (basic and acidic residues). 2 positions are modified to phosphoserine: serine 29 and serine 147. Tyrosine 194 carries the post-translational modification Phosphotyrosine. Serine 361 and serine 363 each carry phosphoserine. 5 PC repeats span residues 409 to 442 (SAAASLGMILLWDVDGGLTQIDKYLYSSEDYIKS), 443 to 479 (GALLACGIVNSGVRNECDPALALLSDYVLHNSNTMRL), 480 to 514 (GSIFGLGLAYAGSNREDVLTLLLPVMGDSKSSMEV), 517 to 551 (VTALACGMIAVGSCNGDVTSTILQTIMEKSETELK), and 560 to 589 (LGLGLNHLGKGEAIEAILAALEVVSEPFRS). The residue at position 551 (lysine 551) is an N6-acetyllysine. Positions 623-643 (KEKEEDKDKKEKKDKDKKEAP) are enriched in basic and acidic residues. The segment at 623-645 (KEKEEDKDKKEKKDKDKKEAPAD) is disordered. PC repeat units lie at residues 692-723 (LALALISVSNPRLNILDTLSKFSHDADPEVSY) and 742-757 (AAMLRQLAQYHAKDPN). Residues 708-903 (DTLSKFSHDA…LEGFVILRKN (196 aa)) form a required for interaction with UBLCP1 region.

It belongs to the proteasome subunit S2 family. Component of the 19S proteasome regulatory particle complex. The 26S proteasome consists of a 20S core particle (CP) and two 19S regulatory subunits (RP). The regulatory particle is made of a lid composed of 9 subunits, a base containing 6 ATPases and few additional components including PSMD2. Interacts with RPGRIP1L. Interacts with CRY1 in a KDM8-dependent manner. Interacts (via C-terminus) with phosphatase UBLCP1 (via ubiquitin-like domain); the interaction recruits UBLCP1 to the 19S regulatory particle where it dephosphorylates 19S subunit PSMC2/RPT1 which impairs PSMC2 ATPase activity and disrupts 26S proteasome assembly.

In terms of biological role, component of the 26S proteasome, a multiprotein complex involved in the ATP-dependent degradation of ubiquitinated proteins. This complex plays a key role in the maintenance of protein homeostasis by removing misfolded or damaged proteins, which could impair cellular functions, and by removing proteins whose functions are no longer required. Therefore, the proteasome participates in numerous cellular processes, including cell cycle progression, apoptosis, or DNA damage repair. Its function is as follows. Binds to the intracellular domain of tumor necrosis factor type 1 receptor. The binding domain of TRAP1 and TRAP2 resides outside the death domain of TNFR1. The polypeptide is 26S proteasome non-ATPase regulatory subunit 2 (PSMD2) (Pongo abelii (Sumatran orangutan)).